The sequence spans 319 residues: ATP-dependent 6-phosphofructokinase (319 aa).

Position 11 (Gly11) interacts with ATP. 21 to 25 (RAVVR) lines the ADP pocket. Residues 72 to 73 (RY) and 102 to 105 (GDGS) each bind ATP. Mg(2+) is bound at residue Asp103. 125–127 (TID) provides a ligand contact to substrate. The Proton acceptor role is filled by Asp127. Arg154 serves as a coordination point for ADP. Residues Arg162 and 169–171 (MGR) each bind substrate. Residues 185–187 (GAE), Arg211, and 213–215 (KKH) contribute to the ADP site. Substrate-binding positions include Glu222, Arg243, and 249–252 (HVQR).

The protein belongs to the phosphofructokinase type A (PFKA) family. ATP-dependent PFK group I subfamily. Prokaryotic clade 'B1' sub-subfamily. In terms of assembly, homotetramer. Mg(2+) serves as cofactor.

The protein resides in the cytoplasm. It carries out the reaction beta-D-fructose 6-phosphate + ATP = beta-D-fructose 1,6-bisphosphate + ADP + H(+). Its pathway is carbohydrate degradation; glycolysis; D-glyceraldehyde 3-phosphate and glycerone phosphate from D-glucose: step 3/4. Allosterically activated by ADP and other diphosphonucleosides, and allosterically inhibited by phosphoenolpyruvate. Its function is as follows. Catalyzes the phosphorylation of D-fructose 6-phosphate to fructose 1,6-bisphosphate by ATP, the first committing step of glycolysis. The protein is ATP-dependent 6-phosphofructokinase of Listeria monocytogenes serotype 4b (strain CLIP80459).